Reading from the N-terminus, the 64-residue chain is Large ribosomal subunit protein uL29 (64 aa).

The protein belongs to the universal ribosomal protein uL29 family.

This is Large ribosomal subunit protein uL29 from Lacticaseibacillus paracasei (strain ATCC 334 / BCRC 17002 / CCUG 31169 / CIP 107868 / KCTC 3260 / NRRL B-441) (Lactobacillus paracasei).